Consider the following 123-residue polypeptide: Large ribosomal subunit protein uL14 (123 aa).

Belongs to the universal ribosomal protein uL14 family. In terms of assembly, part of the 50S ribosomal subunit. Forms a cluster with proteins L3 and L19. In the 70S ribosome, L14 and L19 interact and together make contacts with the 16S rRNA in bridges B5 and B8.

In terms of biological role, binds to 23S rRNA. Forms part of two intersubunit bridges in the 70S ribosome. The chain is Large ribosomal subunit protein uL14 from Enterobacter sp. (strain 638).